Reading from the N-terminus, the 129-residue chain is Fluoride-specific ion channel FluC 2 (129 aa).

Residues 19-39 form a helical membrane-spanning segment; that stretch reads GLGLVVPAAAVGGFPLGTLFI. Residues glycine 74 and threonine 77 each contribute to the Na(+) site. A helical membrane pass occupies residues 95–115; that stretch reads FGMAAVYIAASLFGGLLASWA.

The protein belongs to the fluoride channel Fluc/FEX (TC 1.A.43) family.

It is found in the cell membrane. The enzyme catalyses fluoride(in) = fluoride(out). Its activity is regulated as follows. Na(+) is not transported, but it plays an essential structural role and its presence is essential for fluoride channel function. In terms of biological role, fluoride-specific ion channel. Important for reducing fluoride concentration in the cell, thus reducing its toxicity. This chain is Fluoride-specific ion channel FluC 2, found in Geobacillus kaustophilus (strain HTA426).